A 189-amino-acid polypeptide reads, in one-letter code: Putative 3-methyladenine DNA glycosylase (189 aa).

This sequence belongs to the DNA glycosylase MPG family.

The polypeptide is Putative 3-methyladenine DNA glycosylase (mag) (Corynebacterium glutamicum (strain ATCC 13032 / DSM 20300 / JCM 1318 / BCRC 11384 / CCUG 27702 / LMG 3730 / NBRC 12168 / NCIMB 10025 / NRRL B-2784 / 534)).